The sequence spans 444 residues: Chromosome partition protein MukF (444 aa).

Residues 212–240 (LDETSGNLRELQDTLNAAGDKLQAQLLRI) are leucine-zipper.

The protein belongs to the MukF family. As to quaternary structure, interacts, and probably forms a ternary complex, with MukE and MukB via its C-terminal region. The complex formation is stimulated by calcium or magnesium. It is required for an interaction between MukE and MukB.

The protein localises to the cytoplasm. It localises to the nucleoid. Functionally, involved in chromosome condensation, segregation and cell cycle progression. May participate in facilitating chromosome segregation by condensation DNA from both sides of a centrally located replisome during cell division. Not required for mini-F plasmid partitioning. Probably acts via its interaction with MukB and MukE. Overexpression results in anucleate cells. It has a calcium binding activity. This Haemophilus influenzae (strain PittGG) protein is Chromosome partition protein MukF.